The following is a 364-amino-acid chain: MLEMTIRALIVDDSALIRKLLSDILSQDPNLRIIGTAFNGKDGLEKIKKLRPDVVLLDNIMPVFDGLKTLAWIVKECPTPVVMISAFGERAEEITLTAFEYGAVDVIQRPEGILSQNMPDMAEEICRKTRAATKANLENLECMRNRELEETDINKREKIEKHRSRKETTSFVRNVLAIGASTGGPRALEKLIGSFPADIPAAVLIVQHMPAGFTASFSKRLDSKTALRVKEAEEGDIIEEGTVLIAPGNHHMEIVQKTVKGRKEEVAHLSCSPKELGSRPSVNALFRSIAPIYGSKIVSLVLTGMNCDGADGAEQVKKMGGKIIAEAQSSCVVYGMPKEVVRRKLADFVLPLDKMAEEIVKIIS.

Residues 7 to 124 (RALIVDDSAL…SQNMPDMAEE (118 aa)) form the Response regulatory domain. A 4-aspartylphosphate modification is found at D58. One can recognise a CheB-type methylesterase domain in the interval 167 to 364 (ETTSFVRNVL…MAEEIVKIIS (198 aa)). Catalysis depends on residues S181, H208, and D308.

Belongs to the CheB family. Post-translationally, phosphorylated by CheA. Phosphorylation of the N-terminal regulatory domain activates the methylesterase activity.

Its subcellular location is the cytoplasm. It catalyses the reaction [protein]-L-glutamate 5-O-methyl ester + H2O = L-glutamyl-[protein] + methanol + H(+). It carries out the reaction L-glutaminyl-[protein] + H2O = L-glutamyl-[protein] + NH4(+). In terms of biological role, involved in chemotaxis. Part of a chemotaxis signal transduction system that modulates chemotaxis in response to various stimuli. Catalyzes the demethylation of specific methylglutamate residues introduced into the chemoreceptors (methyl-accepting chemotaxis proteins or MCP) by CheR. Also mediates the irreversible deamidation of specific glutamine residues to glutamic acid. The sequence is that of Protein-glutamate methylesterase/protein-glutamine glutaminase from Methanosarcina barkeri (strain Fusaro / DSM 804).